The chain runs to 188 residues: Adenine phosphoribosyltransferase (188 aa).

It belongs to the purine/pyrimidine phosphoribosyltransferase family. In terms of assembly, homodimer.

It is found in the cytoplasm. The enzyme catalyses AMP + diphosphate = 5-phospho-alpha-D-ribose 1-diphosphate + adenine. It participates in purine metabolism; AMP biosynthesis via salvage pathway; AMP from adenine: step 1/1. Its function is as follows. Catalyzes a salvage reaction resulting in the formation of AMP, that is energically less costly than de novo synthesis. The sequence is that of Adenine phosphoribosyltransferase from Burkholderia lata (strain ATCC 17760 / DSM 23089 / LMG 22485 / NCIMB 9086 / R18194 / 383).